Consider the following 258-residue polypeptide: Short-chain dehydrogenase chyC (258 aa).

NADP(+) contacts are provided by arginine 37, aspartate 55, asparagine 81, tyrosine 154, lysine 158, valine 185, and threonine 187. Tyrosine 154 functions as the Proton donor in the catalytic mechanism. Lysine 158 acts as the Lowers pKa of active site Tyr in catalysis.

This sequence belongs to the short-chain dehydrogenases/reductases (SDR) family.

Its function is as follows. Short-chain dehydrogenase; part of the gene cluster that mediates the biosynthesis of the yellow pigment chrysogine. the NRPS chyA mediates the condensation of anthranilic acid and alanine into the intermediate 2-(2-aminopropanamido)benzoic acid. The remainder of the pathway is highly branched yielding at least 13 chrysogine-related compounds. The malonyl transferase chyE converts 2-(2-aminopropanamido)benzoic acid and 2-(2-aminopropanamido)benzamidine into 2-(2-(2-carboxyacetamido)propanamido)benzoic acid and 3-((1-((2-carbamoylphenyl)amino)-1-oxopropan-2-yl)amino)-3-oxopropanoic acid, respectively. ChyD is an amidase, being responsible for the amidation of the carboxylic acid moiety of 2-(2-aminopropanamido)benzoic acid, 2-(2-(2-carboxyacetamido)propanamido)benzoic acid and 2-(2-((4-amino-1-carboxy-4-oxobutyl)amino)propanamido)benzoic acid. ChyC is involved in the same reactions as ChyD, but plays a more minor role in the amidation reactions compared to chyD. The oxidoreductases chyH and chyM are involved in oxidation reactions that form N-pyruvoylanthranilamide from 2-(2-aminopropanamido)benzamidine and (1-((2-carbamoylphenyl)amino)-1-oxopropan-2-yl)glutamine, respectively. N-pyruvoylanthranilamide is further converted via two further branches in the pathway, yielding chrysogine and additional chrysogine-related coumpounds. Chrysogine is likely formed by a spontaneous ring closure from N-pyruvoylanthranilamide. This chain is Short-chain dehydrogenase chyC, found in Penicillium rubens (strain ATCC 28089 / DSM 1075 / NRRL 1951 / Wisconsin 54-1255) (Penicillium chrysogenum).